The following is a 229-amino-acid chain: Potassium/proton antiporter CemA (229 aa).

2 helical membrane passes run 114-134 (IIYFIILSGYSILGNQELIIL) and 189-209 (IISGLVSTFPVILDTILKYWI).

It belongs to the CemA family.

The protein localises to the plastid. The protein resides in the chloroplast inner membrane. It carries out the reaction K(+)(in) + H(+)(out) = K(+)(out) + H(+)(in). In terms of biological role, contributes to K(+)/H(+) antiport activity by supporting proton efflux to control proton extrusion and homeostasis in chloroplasts in a light-dependent manner to modulate photosynthesis. Prevents excessive induction of non-photochemical quenching (NPQ) under continuous-light conditions. Indirectly promotes efficient inorganic carbon uptake into chloroplasts. The polypeptide is Potassium/proton antiporter CemA (Lotus japonicus (Lotus corniculatus var. japonicus)).